A 332-amino-acid polypeptide reads, in one-letter code: D-lactate dehydrogenase (332 aa).

Residues 155–156 (RI), aspartate 175, 206–207 (VP), asparagine 212, 233–235 (FAR), and aspartate 259 each bind NAD(+). The active site involves arginine 235. Glutamate 264 is an active-site residue. Residue histidine 296 is the Proton donor of the active site.

This sequence belongs to the D-isomer specific 2-hydroxyacid dehydrogenase family.

The catalysed reaction is (R)-lactate + NAD(+) = pyruvate + NADH + H(+). The polypeptide is D-lactate dehydrogenase (ldhD) (Lactiplantibacillus plantarum (strain ATCC BAA-793 / NCIMB 8826 / WCFS1) (Lactobacillus plantarum)).